The primary structure comprises 128 residues: Glycine cleavage system H protein (128 aa).

The region spanning 25 to 107 (TVRVGITDFA…YEGGWLFEIT (83 aa)) is the Lipoyl-binding domain. K66 carries the post-translational modification N6-lipoyllysine.

Belongs to the GcvH family. The glycine cleavage system is composed of four proteins: P, T, L and H. (R)-lipoate serves as cofactor.

The glycine cleavage system catalyzes the degradation of glycine. The H protein shuttles the methylamine group of glycine from the P protein to the T protein. This chain is Glycine cleavage system H protein, found in Micrococcus luteus (strain ATCC 4698 / DSM 20030 / JCM 1464 / CCM 169 / CCUG 5858 / IAM 1056 / NBRC 3333 / NCIMB 9278 / NCTC 2665 / VKM Ac-2230) (Micrococcus lysodeikticus).